Reading from the N-terminus, the 360-residue chain is Peptide chain release factor 1 (360 aa).

At glutamine 235 the chain carries N5-methylglutamine. The segment at 281 to 310 (AERQRQDAAQAESRRLQVGSGDRSQRIRTY) is disordered.

Belongs to the prokaryotic/mitochondrial release factor family. In terms of processing, methylated by PrmC. Methylation increases the termination efficiency of RF1.

The protein localises to the cytoplasm. Peptide chain release factor 1 directs the termination of translation in response to the peptide chain termination codons UAG and UAA. In Stenotrophomonas maltophilia (strain K279a), this protein is Peptide chain release factor 1.